Here is a 1078-residue protein sequence, read N- to C-terminus: Cell wall acid trehalase ATC1 (1078 aa).

A signal peptide spans 1–54 (MAANSSFFLADNCAPHNQSFIQFCIHAASKKKGRIALMCLANLFLLFSFHLLYA). N-linked (GlcNAc...) asparagine glycosylation is found at asparagine 4, asparagine 17, asparagine 150, asparagine 184, asparagine 242, asparagine 287, asparagine 301, and asparagine 350. 478–479 (WD) contacts substrate. Asparagine 532, asparagine 591, and asparagine 601 each carry an N-linked (GlcNAc...) asparagine glycan. The Proton donor role is filled by glutamate 607. Residues asparagine 661 and asparagine 670 are each glycosylated (N-linked (GlcNAc...) asparagine). 676–677 (KQ) is a substrate binding site. 8 N-linked (GlcNAc...) asparagine glycosylation sites follow: asparagine 829, asparagine 837, asparagine 904, asparagine 922, asparagine 931, asparagine 946, asparagine 1003, and asparagine 1037.

It belongs to the glycosyl hydrolase 65 family.

Its subcellular location is the secreted. The protein localises to the cell wall. The enzyme catalyses alpha,alpha-trehalose + H2O = alpha-D-glucose + beta-D-glucose. Its function is as follows. Cell wall acid trehalase that catalyzes hydrolysis of the disaccharide trehalose and required for growth on trehalose as carbon source. Plays a role in dimorphic conversion and virulence. In Candida albicans (strain SC5314 / ATCC MYA-2876) (Yeast), this protein is Cell wall acid trehalase ATC1 (ATC1).